Here is a 557-residue protein sequence, read N- to C-terminus: Pectinesterase/pectinesterase inhibitor 18 (557 aa).

The N-terminal stretch at methionine 1 to alanine 34 is a signal peptide. Positions asparagine 47–isoleucine 203 are pectinesterase inhibitor 18. Residues asparagine 246–glycine 543 are pectinesterase 18. Threonine 321 and glutamine 351 together coordinate substrate. Aspartate 374 acts as the Proton donor; for pectinesterase activity in catalysis. Aspartate 395 functions as the Nucleophile; for pectinesterase activity in the catalytic mechanism. Residues arginine 463 and tryptophan 465 each contribute to the substrate site.

In the N-terminal section; belongs to the PMEI family. This sequence in the C-terminal section; belongs to the pectinesterase family. In terms of tissue distribution, expressed in siliques, flowers, floral stems, rosette leaves and roots.

It is found in the secreted. The protein resides in the cell wall. The enzyme catalyses [(1-&gt;4)-alpha-D-galacturonosyl methyl ester](n) + n H2O = [(1-&gt;4)-alpha-D-galacturonosyl](n) + n methanol + n H(+). It catalyses the reaction Endohydrolysis of the N-glycosidic bond at one specific adenosine on the 28S rRNA.. The protein operates within glycan metabolism; pectin degradation; 2-dehydro-3-deoxy-D-gluconate from pectin: step 1/5. Its function is as follows. Acts in the modification of cell walls via demethylesterification of cell wall pectin. Inhibits the elongation phase of protein synthesis. This is Pectinesterase/pectinesterase inhibitor 18 (PME18) from Arabidopsis thaliana (Mouse-ear cress).